Reading from the N-terminus, the 667-residue chain is Probable potassium transport system protein Kup (667 aa).

A run of 12 helical transmembrane segments spans residues 5 to 25, 47 to 67, 88 to 108, 133 to 153, 164 to 184, 210 to 230, 243 to 263, 287 to 307, 336 to 356, 367 to 387, 393 to 413, and 420 to 440; these read GLLI…LYVM, ISLI…IIAL, AAWL…DGTL, VSNQ…LFSI, AFGP…LINI, AGFA…ALYS, SWPF…VWIL, LASI…LITG, IYIP…VLFF, GLSI…WLVL, LANL…MGSS, and GGYV…VWYF.

This sequence belongs to the HAK/KUP transporter (TC 2.A.72) family.

It localises to the cell membrane. It catalyses the reaction K(+)(in) + H(+)(in) = K(+)(out) + H(+)(out). Its function is as follows. Transport of potassium into the cell. Likely operates as a K(+):H(+) symporter. This is Probable potassium transport system protein Kup from Lactobacillus delbrueckii subsp. bulgaricus (strain ATCC 11842 / DSM 20081 / BCRC 10696 / JCM 1002 / NBRC 13953 / NCIMB 11778 / NCTC 12712 / WDCM 00102 / Lb 14).